Consider the following 486-residue polypeptide: Ribulose bisphosphate carboxylase large chain 1 (486 aa).

The substrate site is built by N125 and T175. The Proton acceptor role is filled by K177. K179 is a substrate binding site. Mg(2+) is bound by residues K203, D205, and E206. K203 bears the N6-carboxylysine mark. The active-site Proton acceptor is H295. Positions 296, 328, and 380 each coordinate substrate.

The protein belongs to the RuBisCO large chain family. Type I subfamily. Heterohexadecamer of 8 large chains and 8 small chains. It depends on Mg(2+) as a cofactor.

It catalyses the reaction 2 (2R)-3-phosphoglycerate + 2 H(+) = D-ribulose 1,5-bisphosphate + CO2 + H2O. The catalysed reaction is D-ribulose 1,5-bisphosphate + O2 = 2-phosphoglycolate + (2R)-3-phosphoglycerate + 2 H(+). Its function is as follows. RuBisCO catalyzes two reactions: the carboxylation of D-ribulose 1,5-bisphosphate, the primary event in carbon dioxide fixation, as well as the oxidative fragmentation of the pentose substrate. Both reactions occur simultaneously and in competition at the same active site. This is Ribulose bisphosphate carboxylase large chain 1 from Bradyrhizobium sp. (strain ORS 278).